The following is a 216-amino-acid chain: Thymidylate kinase (216 aa).

10–17 (GIDGCGKT) is a binding site for ATP.

The protein belongs to the thymidylate kinase family.

The enzyme catalyses dTMP + ATP = dTDP + ADP. Functionally, phosphorylation of dTMP to form dTDP in both de novo and salvage pathways of dTTP synthesis. The chain is Thymidylate kinase from Prochlorococcus marinus (strain MIT 9313).